The chain runs to 137 residues: Large ribosomal subunit protein uL16 (137 aa).

The segment covering 1–16 has biased composition (basic residues); it reads MLQPKRTKFRKVHTGR. Residues 1-22 are disordered; sequence MLQPKRTKFRKVHTGRNRGLAQ.

It belongs to the universal ribosomal protein uL16 family. In terms of assembly, part of the 50S ribosomal subunit.

Functionally, binds 23S rRNA and is also seen to make contacts with the A and possibly P site tRNAs. In Idiomarina loihiensis (strain ATCC BAA-735 / DSM 15497 / L2-TR), this protein is Large ribosomal subunit protein uL16.